Consider the following 271-residue polypeptide: Mannosyl-3-phosphoglycerate phosphatase (271 aa).

The active-site Nucleophile is the Asp13. Residues Asp13, Asp15, and Asp214 each coordinate Mg(2+).

Belongs to the HAD-like hydrolase superfamily. MPGP family. Mg(2+) is required as a cofactor.

The protein resides in the cytoplasm. It carries out the reaction 2-O-(alpha-D-mannosyl)-3-phosphoglycerate + H2O = (2R)-2-O-(alpha-D-mannosyl)-glycerate + phosphate. The polypeptide is Mannosyl-3-phosphoglycerate phosphatase (Escherichia coli (strain SE11)).